Reading from the N-terminus, the 465-residue chain is Cysteine--tRNA ligase (465 aa).

Cysteine 29 is a Zn(2+) binding site. Positions 31–41 match the 'HIGH' region motif; the sequence is PTVYNYIHIGN. 3 residues coordinate Zn(2+): cysteine 209, histidine 234, and glutamate 238. A 'KMSKS' region motif is present at residues 266–270; that stretch reads KMSKS. Lysine 269 serves as a coordination point for ATP. Serine 270 bears the Phosphoserine mark.

The protein belongs to the class-I aminoacyl-tRNA synthetase family. Monomer. Zn(2+) serves as cofactor.

The protein localises to the cytoplasm. The enzyme catalyses tRNA(Cys) + L-cysteine + ATP = L-cysteinyl-tRNA(Cys) + AMP + diphosphate. The polypeptide is Cysteine--tRNA ligase (Bacillus cereus (strain ATCC 10987 / NRS 248)).